Reading from the N-terminus, the 215-residue chain is MKKPYRKISDYAIVGGLSALVMVSIVGCKSNADDKPKEQSSLSQSVQKGAFVILEEQKDKSYKVVEEYPSSRTHIIVRDLQGNERVLSNEEIQKLIKEEEAKIDNGTSKLVQPNNGGSNEGSGFGLGSAILGSAAGAILGSYIGNKLFNNPNYQQNAQRTYKSPQAYQRSQNSFSKSAPSASSMGGASKGQSGFFGSSRPTSSPAVSSGTRGFNS.

A signal peptide spans 1–27 (MKKPYRKISDYAIVGGLSALVMVSIVG). Cysteine 28 is lipidated: N-palmitoyl cysteine. Cysteine 28 carries S-diacylglycerol cysteine lipidation. Residues 158 to 169 (QRTYKSPQAYQR) show a composition bias toward polar residues. The segment at 158 to 215 (QRTYKSPQAYQRSQNSFSKSAPSASSMGGASKGQSGFFGSSRPTSSPAVSSGTRGFNS) is disordered. Low complexity predominate over residues 170–208 (SQNSFSKSAPSASSMGGASKGQSGFFGSSRPTSSPAVSS).

The protein belongs to the UPF0323 family.

The protein localises to the cell membrane. In Helicobacter pylori (strain ATCC 700392 / 26695) (Campylobacter pylori), this protein is UPF0323 lipoprotein HP_0232.